A 179-amino-acid chain; its full sequence is Large ribosomal subunit protein uL6 (179 aa).

It belongs to the universal ribosomal protein uL6 family. As to quaternary structure, part of the 50S ribosomal subunit.

In terms of biological role, this protein binds to the 23S rRNA, and is important in its secondary structure. It is located near the subunit interface in the base of the L7/L12 stalk, and near the tRNA binding site of the peptidyltransferase center. The sequence is that of Large ribosomal subunit protein uL6 from Metamycoplasma arthritidis (strain 158L3-1) (Mycoplasma arthritidis).